The chain runs to 263 residues: Histidine racemase (263 aa).

Cysteine 67 serves as the catalytic Proton acceptor. The active-site Proton donor is the cysteine 209.

It belongs to the histidine racemase family. As to quaternary structure, homodimer.

The enzyme catalyses L-histidine = D-histidine. Cofactor-independent isomerase that catalyzes the reversible conversion of L-histidine to D-histidine. May play a role in growth of F.nucleatum. This is Histidine racemase from Fusobacterium nucleatum subsp. nucleatum (strain ATCC 23726 / VPI 4351).